A 1402-amino-acid polypeptide reads, in one-letter code: Eukaryotic translation initiation factor 4 gamma 1 (1402 aa).

2 disordered regions span residues 1–123 and 165–402; these read MSGA…SPEP and HEPN…YEYK. 2 positions are modified to phosphothreonine: Thr-11 and Thr-27. A compositionally biased stretch (low complexity) spans 53 to 64; the sequence is GPEHSPSESQPS. A compositionally biased stretch (pro residues) spans 65 to 76; the sequence is SPSPTPSPPPIL. A Phosphoserine modification is found at Ser-120. The segment covering 238-251 has biased composition (low complexity); it reads ASATPPAVPSATPA. Residues 261 to 275 show a composition bias toward acidic residues; sequence QEEEGEEEEEEEEGE. Basic and acidic residues-rich tracts occupy residues 280-290 and 324-340; these read ESDKGGEDLHP and KELN…DAFK. A compositionally biased stretch (low complexity) spans 359–370; sequence PTPESEGSSGPS. Basic and acidic residues predominate over residues 379–388; that stretch reads WDAKEDKIHN. The residue at position 452 (Thr-452) is a Phosphothreonine. Disordered regions lie at residues 476–517, 536–563, 600–636, and 828–1028; these read ANLG…PPKG, AEKA…GSKT, SKGS…ATTE, and MAKG…KREA. Over residues 479–488 the composition is skewed to low complexity; it reads GRPALSSRGP. 2 positions are modified to omega-N-methylarginine: Arg-490 and Arg-499. Over residues 547–563 the composition is skewed to basic and acidic residues; the sequence is TAADKDRGEEDADGSKT. The 227-residue stretch at 567–793 folds into the MIF4G domain; that stretch reads FRRVRSILNK…QDVLDLRQSN (227 aa). Over residues 602 to 621 the composition is skewed to polar residues; that stretch reads GSLTSSLRRPFQNPTSQWPS. At Ser-832 the chain carries Phosphoserine. Residues Arg-836 and Arg-846 each carry the omega-N-methylarginine modification. Phosphoserine is present on residues Ser-881 and Ser-896. Over residues 892-913 the composition is skewed to low complexity; it reads GGRLSWGKGSSGSGAKPSDAAS. The residue at position 899 (Lys-899) is an N6-acetyllysine. The segment covering 918-937 has biased composition (polar residues); sequence PATSTLNRFSALQQAVPTES. A phosphoserine mark is found at Ser-948 and Ser-950. Positions 949–981 are enriched in basic and acidic residues; it reads LSRERGGKAGEPRRRLERSERGGDRGDRLDRAR. Ser-988 is modified (phosphoserine; by PKC/PRKCA). Basic and acidic residues predominate over residues 989-1028; that stretch reads FSKEVEERSRERPSQPEGLRKAASLTEDRDRGRDAAKREA. Phosphoserine is present on residues Ser-990, Ser-997, and Ser-1012. Thr-1014 carries the phosphothreonine modification. A phosphoserine mark is found at Ser-1034 and Ser-1041. The MI domain maps to 1044-1166; that stretch reads ELEKKSKAII…PMGELFREIT (123 aa). The W2 domain maps to 1231–1401; the sequence is EESEAPGQRA…REVEEEESDH (171 aa). Phosphoserine is present on Ser-1399.

It belongs to the eukaryotic initiation factor 4G family. As to quaternary structure, eIF4F is a multi-subunit complex, the composition of which varies with external and internal environmental conditions. It is composed of at least EIF4A, EIF4E (cap-binding) and EIF4G1/EIF4G3. Interacts with eIF3 complex, mutually exclusive with EIF4A1 or EIF4A2, EIF4E and through its N-terminus with PABPC1. Interacts with EIF4E or with EIF1 (mutually exclusive) through a common binding site. Interacts through its C-terminus with the serine/threonine kinases MKNK1, and with MKNK2. Appears to act as a scaffold protein, holding these enzymes in place to phosphorylate EIF4E. Non-phosphorylated EIF4EBP1 competes with EIF4G1/EIF4G3 to interact with EIF4E; insulin stimulated MAP-kinase (MAPK1 and MAPK3) phosphorylation of EIF4EBP1 causes dissociation of the complex allowing EIF4G1/EIF4G3 to bind and consequent initiation of translation. EIF4G1/EIF4G3 interacts with PABPC1 to bring about circularization of the mRNA. Interacts with EIF4E3. Interacts with CIRBP and MIF4GD. Interacts with RBM4. Interacts with HNRNPD/AUF1; the interaction requires RNA. Interacts with DDX3X; the interaction requires RNA. Interacts with DAZAP2. Post-translationally, phosphorylated at multiple sites in vivo. Phosphorylation at Ser-988 by PRKCA induces binding to MKNK1.

Its subcellular location is the cytoplasm. It is found in the nucleus. The protein localises to the stress granule. In terms of biological role, component of the protein complex eIF4F, which is involved in the recognition of the mRNA cap, ATP-dependent unwinding of 5'-terminal secondary structure and recruitment of mRNA to the ribosome. Exists in two complexes, either with EIF1 or with EIF4E (mutually exclusive). Together with EIF1, is required for leaky scanning, in particular for avoiding cap-proximal start codon. Together with EIF4E, antagonizes the scanning promoted by EIF1-EIF4G1 and locates the start codon (through a TISU element) without scanning. As a member of the eIF4F complex, required for endoplasmic reticulum stress-induced ATF4 mRNA translation. This Oryctolagus cuniculus (Rabbit) protein is Eukaryotic translation initiation factor 4 gamma 1 (EIF4G1).